Here is a 388-residue protein sequence, read N- to C-terminus: Chorismate synthase (388 aa).

Residues arginine 39 and arginine 45 each coordinate NADP(+). Residues arginine 132–serine 134, asparagine 251–alanine 252, glycine 296, lysine 311–threonine 315, and arginine 337 each bind FMN.

It belongs to the chorismate synthase family. Homotetramer. FMNH2 serves as cofactor.

The catalysed reaction is 5-O-(1-carboxyvinyl)-3-phosphoshikimate = chorismate + phosphate. It participates in metabolic intermediate biosynthesis; chorismate biosynthesis; chorismate from D-erythrose 4-phosphate and phosphoenolpyruvate: step 7/7. Catalyzes the anti-1,4-elimination of the C-3 phosphate and the C-6 proR hydrogen from 5-enolpyruvylshikimate-3-phosphate (EPSP) to yield chorismate, which is the branch point compound that serves as the starting substrate for the three terminal pathways of aromatic amino acid biosynthesis. This reaction introduces a second double bond into the aromatic ring system. The sequence is that of Chorismate synthase from Staphylococcus epidermidis (strain ATCC 35984 / DSM 28319 / BCRC 17069 / CCUG 31568 / BM 3577 / RP62A).